The sequence spans 167 residues: Small ribosomal subunit protein uS9 (167 aa).

The tract at residues 136-167 (KRAGFLTRDPRATERKKYGLKKARKAPQYSKR) is disordered. Basic and acidic residues predominate over residues 143–152 (RDPRATERKK). A compositionally biased stretch (basic residues) spans 153–167 (YGLKKARKAPQYSKR).

Belongs to the universal ribosomal protein uS9 family.

The polypeptide is Small ribosomal subunit protein uS9 (Nocardia farcinica (strain IFM 10152)).